A 186-amino-acid polypeptide reads, in one-letter code: Probable GTP-binding protein EngB (186 aa).

In terms of domain architecture, EngB-type G spans 18–186 (DKKEICFIGR…LKKLIGSVIL (169 aa)). GTP contacts are provided by residues 26-33 (GRSNVGKS), 52-56 (GRTQL), 69-72 (DLPG), 135-138 (NKAD), and 166-168 (VSA). Mg(2+)-binding residues include S33 and T54.

The protein belongs to the TRAFAC class TrmE-Era-EngA-EngB-Septin-like GTPase superfamily. EngB GTPase family. Mg(2+) is required as a cofactor.

In terms of biological role, necessary for normal cell division and for the maintenance of normal septation. The polypeptide is Probable GTP-binding protein EngB (Malacoplasma penetrans (strain HF-2) (Mycoplasma penetrans)).